The sequence spans 1407 residues: DNA-directed RNA polymerase subunit beta' (1407 aa).

Zn(2+)-binding residues include Cys70, Cys72, Cys85, and Cys88. Positions 460, 462, and 464 each coordinate Mg(2+). Residues Cys814, Cys888, Cys895, and Cys898 each coordinate Zn(2+). The residue at position 972 (Lys972) is an N6-acetyllysine.

This sequence belongs to the RNA polymerase beta' chain family. The RNAP catalytic core consists of 2 alpha, 1 beta, 1 beta' and 1 omega subunit. When a sigma factor is associated with the core the holoenzyme is formed, which can initiate transcription. It depends on Mg(2+) as a cofactor. Zn(2+) serves as cofactor.

The catalysed reaction is RNA(n) + a ribonucleoside 5'-triphosphate = RNA(n+1) + diphosphate. Functionally, DNA-dependent RNA polymerase catalyzes the transcription of DNA into RNA using the four ribonucleoside triphosphates as substrates. The polypeptide is DNA-directed RNA polymerase subunit beta' (Shigella boydii serotype 18 (strain CDC 3083-94 / BS512)).